The following is a 321-amino-acid chain: tRNA U34 carboxymethyltransferase (321 aa).

Carboxy-S-adenosyl-L-methionine is bound by residues K90, W104, K109, G129, 151-153, 180-181, M195, Y199, and R314; these read DPT and IE.

Belongs to the class I-like SAM-binding methyltransferase superfamily. CmoB family. Homotetramer.

The catalysed reaction is carboxy-S-adenosyl-L-methionine + 5-hydroxyuridine(34) in tRNA = 5-carboxymethoxyuridine(34) in tRNA + S-adenosyl-L-homocysteine + H(+). Functionally, catalyzes carboxymethyl transfer from carboxy-S-adenosyl-L-methionine (Cx-SAM) to 5-hydroxyuridine (ho5U) to form 5-carboxymethoxyuridine (cmo5U) at position 34 in tRNAs. The sequence is that of tRNA U34 carboxymethyltransferase from Histophilus somni (strain 129Pt) (Haemophilus somnus).